We begin with the raw amino-acid sequence, 444 residues long: Spermatogenesis-associated protein 1 (444 aa).

A compositionally biased stretch (basic and acidic residues) spans 145–160; that stretch reads GTIHRPDSLSLSKDEP. Residues 145–229 are disordered; sequence GTIHRPDSLS…DEGEEDDKAT (85 aa). Residues 268–403 are a coiled coil; that stretch reads SLLKIEREKI…RKLDTDKMKL (136 aa).

As to quaternary structure, interacts with IFT20.

Its subcellular location is the cytoplasmic vesicle. The protein resides in the secretory vesicle. It localises to the acrosome. This chain is Spermatogenesis-associated protein 1 (Spata1), found in Rattus norvegicus (Rat).